A 197-amino-acid chain; its full sequence is dTTP/UTP pyrophosphatase (197 aa).

Catalysis depends on Asp-70, which acts as the Proton acceptor.

It belongs to the Maf family. YhdE subfamily. As to quaternary structure, homodimer. Can also form homotetramers. It depends on a divalent metal cation as a cofactor.

Its subcellular location is the cytoplasm. The catalysed reaction is dTTP + H2O = dTMP + diphosphate + H(+). It catalyses the reaction UTP + H2O = UMP + diphosphate + H(+). The enzyme catalyses 5-methyl-UTP + H2O = 5-methyl-UMP + diphosphate + H(+). It carries out the reaction psi-UTP + H2O = psi-UMP + diphosphate + H(+). The catalysed reaction is 5-methyl-CTP + H2O = 5-methyl-CMP + diphosphate + H(+). Nucleoside triphosphate pyrophosphatase that hydrolyzes dTTP and UTP. Can also hydrolyze TTP and the modified nucleotides 5-methyl-UTP (m(5)UTP), pseudo-UTP and 5-methyl-CTP (m(5)CTP). Has weak activity with CTP. May have a dual role in cell division arrest and in preventing the incorporation of modified nucleotides into cellular nucleic acids. Important in maintenance of cell shape. The sequence is that of dTTP/UTP pyrophosphatase (yhdE) from Escherichia coli (strain K12).